We begin with the raw amino-acid sequence, 189 residues long: MRLSLPLLLLLLGAWAIPGGLGDRAPLTATAPQLDDEEMYSAHMPAHLRCDACRAVAYQMWQNLAKAETKLHTSNSGGRRELSELVYTDVLDRSCSRNWQDYGVREVDQVKRLTGPGLSEGPEPSISVMVTGGPWPTRLSRTCLHYLGEFGEDQIYEAHQQGRGALEALLCGGPQGACSEKVSATREEL.

The first 22 residues, 1–22, serve as a signal peptide directing secretion; it reads MRLSLPLLLLLLGAWAIPGGLG. Disulfide bonds link cysteine 50–cysteine 178, cysteine 53–cysteine 171, and cysteine 95–cysteine 143. Positions 186 to 189 match the Prevents secretion from ER motif; it reads REEL.

Belongs to the MZB1 family. Part of the ER chaperone complex, a multi-protein complex in the endoplasmic reticulum containing a large number of molecular chaperones which associates with unassembled incompletely folded immunoglobulin heavy chains. Isoform 2 interacts with CASP2 and CASP9. Interacts with HSP90B1 and PDIA3 in a calcium-dependent manner. In terms of processing, forms an interchain disulfide bond with IgM monomers. As to expression, widely expressed with highest levels in adult brain, small intestine and lymphoid tissues such as thymus and spleen. Expression is frequently lower in intestinal-type gastric cancer. In obese patients, more abundant in omental than in subcutaneous fat.

It is found in the endoplasmic reticulum lumen. The protein resides in the secreted. The protein localises to the cytoplasm. In terms of biological role, associates with immunoglobulin M (IgM) heavy and light chains and promotes IgM assembly and secretion. May exert its effect by acting as a molecular chaperone or as an oxidoreductase as it displays a low level of oxidoreductase activity. Isoform 2 may be involved in regulation of apoptosis. Helps to diversify peripheral B-cell functions by regulating Ca(2+) stores, antibody secretion and integrin activation. Its function is as follows. Acts as a hormone-regulated adipokine/pro-inflammatory cytokine that is implicated in causing chronic inflammation, affecting cellular expansion and blunting insulin response in adipocytes. May have a role in the onset of insulin resistance. In Homo sapiens (Human), this protein is Marginal zone B- and B1-cell-specific protein (MZB1).